The following is a 339-amino-acid chain: Fructose-1,6-bisphosphatase, cytosolic (339 aa).

Residues glutamate 71, glutamate 100, aspartate 121, leucine 123, and aspartate 124 each coordinate Mg(2+). Substrate is bound by residues 124–127 (DGSS), asparagine 215, tyrosine 247, tyrosine 267, and lysine 277. Glutamate 283 is a binding site for Mg(2+).

Belongs to the FBPase class 1 family. Mg(2+) serves as cofactor.

Its subcellular location is the cytoplasm. The catalysed reaction is beta-D-fructose 1,6-bisphosphate + H2O = beta-D-fructose 6-phosphate + phosphate. The chain is Fructose-1,6-bisphosphatase, cytosolic from Oryza sativa subsp. indica (Rice).